We begin with the raw amino-acid sequence, 832 residues long: DEAD-box ATP-dependent RNA helicase 13 (832 aa).

A compositionally biased stretch (pro residues) spans 1-12; that stretch reads MAAAPPPPPPPQ. Disordered regions lie at residues 1–59 and 91–173; these read MAAA…TMVE and VEDL…DDNV. Over residues 29–42 the composition is skewed to basic residues; it reads RKGKKSRGAKKPRR. The segment covering 43-55 has biased composition (low complexity); it reads AAAAAAASTSSAG. A compositionally biased stretch (basic residues) spans 105 to 114; the sequence is QKKKKRKKRK. The segment covering 128–137 has biased composition (acidic residues); the sequence is LVVECEEEGE. Residues 141-155 show a composition bias toward basic residues; the sequence is KRVKKKRRSRKKRKV. Residues 156–167 show a composition bias toward basic and acidic residues; it reads KEMEEKMESKED. The Q motif motif lies at 198–226; sequence YAWRELRLHPLLITAVRRLGFKEPTPIQK. The Helicase ATP-binding domain maps to 230-447; it reads PAAAHQGKDV…KLKRGLVTAK (218 aa). 243–250 contributes to the ATP binding site; that stretch reads AETGSGKT. Residues 371–374 carry the DEAD box motif; sequence DEAD. Positions 484 to 645 constitute a Helicase C-terminal domain; it reads KLEESFIECS…QFPVDHAYMP (162 aa). The disordered stretch occupies residues 800–832; sequence RRLAENWRRKKQKEKKSTREQKRKEKRIAKERD. Positions 814–832 are enriched in basic and acidic residues; it reads KKSTREQKRKEKRIAKERD.

The protein belongs to the DEAD box helicase family. DDX24/MAK5 subfamily.

The catalysed reaction is ATP + H2O = ADP + phosphate + H(+). In Oryza sativa subsp. japonica (Rice), this protein is DEAD-box ATP-dependent RNA helicase 13.